The following is a 96-amino-acid chain: Co-chaperonin GroES (96 aa).

Belongs to the GroES chaperonin family. In terms of assembly, heptamer of 7 subunits arranged in a ring. Interacts with the chaperonin GroEL.

It is found in the cytoplasm. Its function is as follows. Together with the chaperonin GroEL, plays an essential role in assisting protein folding. The GroEL-GroES system forms a nano-cage that allows encapsulation of the non-native substrate proteins and provides a physical environment optimized to promote and accelerate protein folding. GroES binds to the apical surface of the GroEL ring, thereby capping the opening of the GroEL channel. In Photobacterium profundum (strain SS9), this protein is Co-chaperonin GroES.